Consider the following 314-residue polypeptide: Olfactory receptor 1E1 (314 aa).

At 1 to 25 (MMGQNQTSISDFLLLGLPIQPEQQN) the chain is on the extracellular side. Asparagine 5 carries N-linked (GlcNAc...) asparagine glycosylation. Residues 26–49 (LCYALFLAMYLTTLLGNLLIIVLI) traverse the membrane as a helical segment. At 50–57 (RLDSHLHT) the chain is on the cytoplasmic side. Residues 58 to 79 (PMYLFLSNLSFSDLCFSSVTIP) traverse the membrane as a helical segment. At 80-100 (KLLQNMQNQDPSIPYADCLTQ) the chain is on the extracellular side. A helical transmembrane segment spans residues 101-120 (MYFFLLFGDLESFLLVAMAY). The Cytoplasmic portion of the chain corresponds to 121–139 (DRYVAICFPLHYTAIMSPM). The helical transmembrane segment at 140 to 158 (LCLALVALSWVLTTFHAML) threads the bilayer. Residues 159-195 (HTLLMARLCFCADNVIPHFFCDMSALLKLAFSDTRVN) lie on the Extracellular side of the membrane. The helical transmembrane segment at 196 to 219 (EWVIFIMGGLILVIPFLLILGSYA) threads the bilayer. The Cytoplasmic segment spans residues 220 to 236 (RIVSSILKVPSSKGICK). A helical membrane pass occupies residues 237-259 (AFSTCGSHLSVVSLFYGTVIGLY). Topologically, residues 260–272 (LCSSANSSTLKDT) are extracellular. The helical transmembrane segment at 273-292 (VMAMMYTVVTPMLNPFIYSL) threads the bilayer. At 293-314 (RNRDMKGALSRVIHQKKTFFSL) the chain is on the cytoplasmic side.

Belongs to the G-protein coupled receptor 1 family.

The protein localises to the cell membrane. In terms of biological role, odorant receptor. This is Olfactory receptor 1E1 (OR1E1) from Homo sapiens (Human).